The primary structure comprises 278 residues: Orotidine 5'-phosphate decarboxylase (278 aa).

Substrate-binding positions include Asp40, 65–67 (KTH), 96–105 (DRKFIDIGNT), Tyr230, and Arg248. Catalysis depends on Lys98, which acts as the Proton donor.

Belongs to the OMP decarboxylase family.

It catalyses the reaction orotidine 5'-phosphate + H(+) = UMP + CO2. It participates in pyrimidine metabolism; UMP biosynthesis via de novo pathway; UMP from orotate: step 2/2. This Penicillium chrysogenum (Penicillium notatum) protein is Orotidine 5'-phosphate decarboxylase (pyrG).